Reading from the N-terminus, the 84-residue chain is MSGGSTGERPFSDIITSVRYWIIHSITIPSLFVSGWLFVSTGLAYDVFGTPRPNEYFTQDRQQIPLVNDRFSAKQELEDLTKGL.

A helical membrane pass occupies residues 22–36; the sequence is IIHSITIPSLFVSGW. A heme-binding site is contributed by H24.

The protein belongs to the PsbE/PsbF family. In terms of assembly, heterodimer of an alpha subunit and a beta subunit. PSII is composed of 1 copy each of membrane proteins PsbA, PsbB, PsbC, PsbD, PsbE, PsbF, PsbH, PsbI, PsbJ, PsbK, PsbL, PsbM, PsbT, PsbX, PsbY, PsbZ, Psb30/Ycf12, at least 3 peripheral proteins of the oxygen-evolving complex and a large number of cofactors. It forms dimeric complexes. The cofactor is heme b.

It is found in the plastid. The protein resides in the chloroplast thylakoid membrane. Functionally, this b-type cytochrome is tightly associated with the reaction center of photosystem II (PSII). PSII is a light-driven water:plastoquinone oxidoreductase that uses light energy to abstract electrons from H(2)O, generating O(2) and a proton gradient subsequently used for ATP formation. It consists of a core antenna complex that captures photons, and an electron transfer chain that converts photonic excitation into a charge separation. The sequence is that of Cytochrome b559 subunit alpha from Phaeodactylum tricornutum (strain CCAP 1055/1).